Consider the following 914-residue polypeptide: Protein translocase subunit SecA (914 aa).

ATP-binding positions include glutamine 87, glycine 105–threonine 109, and aspartate 508. Cysteine 898, cysteine 900, cysteine 909, and histidine 910 together coordinate Zn(2+).

The protein belongs to the SecA family. Monomer and homodimer. Part of the essential Sec protein translocation apparatus which comprises SecA, SecYEG and auxiliary proteins SecDF-YajC and YidC. It depends on Zn(2+) as a cofactor.

It localises to the cell inner membrane. The protein resides in the cytoplasm. The enzyme catalyses ATP + H2O + cellular proteinSide 1 = ADP + phosphate + cellular proteinSide 2.. Part of the Sec protein translocase complex. Interacts with the SecYEG preprotein conducting channel. Has a central role in coupling the hydrolysis of ATP to the transfer of proteins into and across the cell membrane, serving both as a receptor for the preprotein-SecB complex and as an ATP-driven molecular motor driving the stepwise translocation of polypeptide chains across the membrane. The sequence is that of Protein translocase subunit SecA from Xylella fastidiosa (strain M23).